Reading from the N-terminus, the 206-residue chain is MSLRRRTLLKVIVLGDSGVGKTSLMNQYVHKKFSQQYKATIGADFVTKELQIDDRLVTLQIWDTAGQERFQSLGVAFYRGADCCVLVYDVNVMKSFDTLENWHEEFLKQANPPDPRAFPFILLGNKIDIDGGNSRVVSEKKAKDWCAAKGNIPYFETSAKEDYNVDAAFLCIAKAALANEHEQDIYFQGIPEAAVPENEQRSGCAC.

Residues 15 to 22, 63 to 67, and 125 to 128 each bind GTP; these read GDSGVGKT, DTAGQ, and NKID. 2 S-geranylgeranyl cysteine lipidation sites follow: cysteine 204 and cysteine 206. Cysteine 206 bears the Cysteine methyl ester mark.

It belongs to the small GTPase superfamily. Rab family.

The protein resides in the cell membrane. Its function is as follows. Protein transport. Probably involved in vesicular traffic. The chain is Ras-related protein Rab7 from Glycine max (Soybean).